We begin with the raw amino-acid sequence, 251 residues long: Uroporphyrinogen-III synthase (251 aa).

The segment at 231–251 is disordered; sequence PAPNPESLASSIVAFDEENSS.

This sequence belongs to the uroporphyrinogen-III synthase family.

The catalysed reaction is hydroxymethylbilane = uroporphyrinogen III + H2O. The protein operates within porphyrin-containing compound metabolism; protoporphyrin-IX biosynthesis; coproporphyrinogen-III from 5-aminolevulinate: step 3/4. Functionally, catalyzes cyclization of the linear tetrapyrrole, hydroxymethylbilane, to the macrocyclic uroporphyrinogen III. In Schizosaccharomyces pombe (strain 972 / ATCC 24843) (Fission yeast), this protein is Uroporphyrinogen-III synthase (ups1).